Reading from the N-terminus, the 357-residue chain is UDP-N-acetylglucosamine--N-acetylmuramyl-(pentapeptide) pyrophosphoryl-undecaprenol N-acetylglucosamine transferase (357 aa).

UDP-N-acetyl-alpha-D-glucosamine is bound by residues 15–17 (TGG), Asn-123, Arg-164, Ser-190, and Gln-284.

This sequence belongs to the glycosyltransferase 28 family. MurG subfamily.

The protein localises to the cell inner membrane. It catalyses the reaction di-trans,octa-cis-undecaprenyl diphospho-N-acetyl-alpha-D-muramoyl-L-alanyl-D-glutamyl-meso-2,6-diaminopimeloyl-D-alanyl-D-alanine + UDP-N-acetyl-alpha-D-glucosamine = di-trans,octa-cis-undecaprenyl diphospho-[N-acetyl-alpha-D-glucosaminyl-(1-&gt;4)]-N-acetyl-alpha-D-muramoyl-L-alanyl-D-glutamyl-meso-2,6-diaminopimeloyl-D-alanyl-D-alanine + UDP + H(+). It participates in cell wall biogenesis; peptidoglycan biosynthesis. Cell wall formation. Catalyzes the transfer of a GlcNAc subunit on undecaprenyl-pyrophosphoryl-MurNAc-pentapeptide (lipid intermediate I) to form undecaprenyl-pyrophosphoryl-MurNAc-(pentapeptide)GlcNAc (lipid intermediate II). The chain is UDP-N-acetylglucosamine--N-acetylmuramyl-(pentapeptide) pyrophosphoryl-undecaprenol N-acetylglucosamine transferase from Synechococcus elongatus (strain ATCC 33912 / PCC 7942 / FACHB-805) (Anacystis nidulans R2).